A 523-amino-acid chain; its full sequence is Magnesium/proton exchanger 1 (523 aa).

The next 11 membrane-spanning stretches (helical) occupy residues 24-44 (LLPI…CFIG), 88-108 (IADV…LATI), 125-145 (GTLV…CVVM), 157-177 (LGVW…LYII), 185-205 (VITL…LLHA), 325-345 (VIGI…AFVP), 349-369 (IAHG…IAYG), 377-397 (ISCV…AAGT), 428-448 (VNIY…NYFV), 461-481 (LSFS…VLVL), and 495-515 (MWAW…VVLS).

Belongs to the Ca(2+):cation antiporter (CaCA) (TC 2.A.19) family. MHX subfamily.

Its subcellular location is the vacuole membrane. Its function is as follows. Vacuolar transporter that exchanges protons with Mg(2+), Zn(2+) and Fe(2+) ions. May control the partitioning of Mg(2+) and Zn(2+) between plant organs. The protein is Magnesium/proton exchanger 1 (MHX1) of Oryza sativa subsp. japonica (Rice).